The following is a 363-amino-acid chain: Ribosomal RNA large subunit methyltransferase M (363 aa).

S-adenosyl-L-methionine contacts are provided by residues serine 190, 223–226 (CPGG), aspartate 242, aspartate 262, and aspartate 280. Lysine 309 functions as the Proton acceptor in the catalytic mechanism.

The protein belongs to the class I-like SAM-binding methyltransferase superfamily. RNA methyltransferase RlmE family. RlmM subfamily. Monomer.

It localises to the cytoplasm. The catalysed reaction is cytidine(2498) in 23S rRNA + S-adenosyl-L-methionine = 2'-O-methylcytidine(2498) in 23S rRNA + S-adenosyl-L-homocysteine + H(+). Functionally, catalyzes the 2'-O-methylation at nucleotide C2498 in 23S rRNA. The protein is Ribosomal RNA large subunit methyltransferase M of Actinobacillus pleuropneumoniae serotype 5b (strain L20).